The chain runs to 458 residues: 5-hydroxytryptamine receptor 2C (458 aa).

A signal peptide spans 1-32 (MVNLRNAVHSFLVHLIGLLVWQCDISVSPVAA). Topologically, residues 33-55 (IVTDIFNTSDGGRFKFPDGVQNW) are extracellular. A helical membrane pass occupies residues 56–80 (PALSIVVIIIMTIGGNILVIMAVSM). Over 81 to 86 (EKKLHN) the chain is Cytoplasmic. A helical transmembrane segment spans residues 87–111 (ATNYFLMSLAIADMLVGLLVMPLSL). Residues 112–128 (LAILYDYVWPLPRYLCP) are Extracellular-facing. Cys127 and Cys207 are joined by a disulfide. The helical transmembrane segment at 129 to 151 (VWISLDVLFSTASIMHLCAISLD) threads the bilayer. An ergotamine-binding site is contributed by Thr139. A DRY motif; important for ligand-induced conformation changes motif is present at residues 151–153 (DRY). Residues 152–167 (RYVAIRNPIEHSRFNS) lie on the Cytoplasmic side of the membrane. A helical transmembrane segment spans residues 168–189 (RTKAIMKIAIVWAISIGVSVPI). Residues 190-213 (PVIGLRDERKVFVNNTTCVLNDPN) are Extracellular-facing. Leu209 is an ergotamine binding site. Residues 214–236 (FVLIGSFVAFFIPLTIMVITYCL) traverse the membrane as a helical segment. The Cytoplasmic segment spans residues 237 to 311 (TIYVLRRQAL…AINNERKASK (75 aa)). Positions 274 to 301 (EENSANPNQDQNARRRKKKERRPRGTMQ) are disordered. Positions 287–297 (RRRKKKERRPR) are enriched in basic residues. Residues 312–336 (VLGIVFFVFLIMWCPFFITNILSVL) traverse the membrane as a helical segment. Cys337 and Cys341 form a disulfide bridge. Topologically, residues 337–347 (CEKSCNQKLME) are extracellular. A helical transmembrane segment spans residues 348–370 (KLLNVFVWIGYVCSGINPLVYTL). Residues 364-368 (NPLVY) carry the NPxxY motif; important for ligand-induced conformation changes and signaling motif. Over 371–458 (FNKIYRRAFS…SVVSERISSV (88 aa)) the chain is Cytoplasmic. The short motif at 456 to 458 (SSV) is the PDZ-binding element.

The protein belongs to the G-protein coupled receptor 1 family. Interacts with MPDZ. Interacts with ARRB2. Interacts with MPP3; this interaction stabilizes the receptor at the plasma membrane and prevents the desensitization of the HTR2C receptor-mediated calcium response.

It is found in the cell membrane. Functionally, G-protein coupled receptor for 5-hydroxytryptamine (serotonin). Also functions as a receptor for various drugs and psychoactive substances, including ergot alkaloid derivatives, 1-2,5,-dimethoxy-4-iodophenyl-2-aminopropane (DOI) and lysergic acid diethylamide (LSD). Ligand binding causes a conformation change that triggers signaling via guanine nucleotide-binding proteins (G proteins) and modulates the activity of downstream effectors. HTR2C is coupled to G(q)/G(11) G alpha proteins and activates phospholipase C-beta, releasing diacylglycerol (DAG) and inositol 1,4,5-trisphosphate (IP3) second messengers that modulate the activity of phosphatidylinositol 3-kinase and promote the release of Ca(2+) ions from intracellular stores, respectively. Beta-arrestin family members inhibit signaling via G proteins and mediate activation of alternative signaling pathways. Regulates neuronal activity via the activation of short transient receptor potential calcium channels in the brain, and thereby modulates the activation of pro-opiomelanocortin neurons and the release of CRH that then regulates the release of corticosterone. Plays a role in the regulation of appetite and eating behavior, responses to anxiogenic stimuli and stress. Plays a role in insulin sensitivity and glucose homeostasis. This is 5-hydroxytryptamine receptor 2C from Pan troglodytes (Chimpanzee).